The primary structure comprises 276 residues: Elongation factor Ts (276 aa).

Residues 80–83 are involved in Mg(2+) ion dislocation from EF-Tu; that stretch reads TDFV.

The protein belongs to the EF-Ts family.

It is found in the cytoplasm. Functionally, associates with the EF-Tu.GDP complex and induces the exchange of GDP to GTP. It remains bound to the aminoacyl-tRNA.EF-Tu.GTP complex up to the GTP hydrolysis stage on the ribosome. The chain is Elongation factor Ts from Acidothermus cellulolyticus (strain ATCC 43068 / DSM 8971 / 11B).